A 402-amino-acid chain; its full sequence is Speedy protein E5 (402 aa).

Residues 1–89 (MDRTETRFRK…EEPEKELAPE (89 aa)) form a disordered region. Polar residues predominate over residues 16-39 (EKITTSRQPQPQNEQSPQRSTSGY). The segment covering 76 to 89 (DESAEEPEKELAPE) has biased composition (acidic residues).

The protein belongs to the Speedy/Ringo family.

The polypeptide is Speedy protein E5 (SPDYE5) (Homo sapiens (Human)).